Consider the following 483-residue polypeptide: Probable cobyric acid synthase (483 aa).

Residues 247 to 433 (ELHIQIIKLP…LHGIFHNFAF (187 aa)) form the GATase cobBQ-type domain. C325 serves as the catalytic Nucleophile. H425 is an active-site residue.

This sequence belongs to the CobB/CobQ family. CobQ subfamily.

The protein operates within cofactor biosynthesis; adenosylcobalamin biosynthesis. Functionally, catalyzes amidations at positions B, D, E, and G on adenosylcobyrinic A,C-diamide. NH(2) groups are provided by glutamine, and one molecule of ATP is hydrogenolyzed for each amidation. This chain is Probable cobyric acid synthase, found in Thermococcus gammatolerans (strain DSM 15229 / JCM 11827 / EJ3).